The following is a 394-amino-acid chain: Dual-specificity RNA methyltransferase RlmN (394 aa).

Glu92 (proton acceptor) is an active-site residue. One can recognise a Radical SAM core domain in the interval 98–341 (ENDRGTLCIS…TTVRRTRGDD (244 aa)). An intrachain disulfide couples Cys105 to Cys346. [4Fe-4S] cluster-binding residues include Cys112, Cys116, and Cys119. S-adenosyl-L-methionine is bound by residues 166 to 167 (GE), Ser198, 220 to 222 (SLH), and Asn303. The S-methylcysteine intermediate role is filled by Cys346. Residues 374–394 (DSAVQRRADAAPSGSATETTR) are disordered.

Belongs to the radical SAM superfamily. RlmN family. [4Fe-4S] cluster serves as cofactor.

Its subcellular location is the cytoplasm. It carries out the reaction adenosine(2503) in 23S rRNA + 2 reduced [2Fe-2S]-[ferredoxin] + 2 S-adenosyl-L-methionine = 2-methyladenosine(2503) in 23S rRNA + 5'-deoxyadenosine + L-methionine + 2 oxidized [2Fe-2S]-[ferredoxin] + S-adenosyl-L-homocysteine. The catalysed reaction is adenosine(37) in tRNA + 2 reduced [2Fe-2S]-[ferredoxin] + 2 S-adenosyl-L-methionine = 2-methyladenosine(37) in tRNA + 5'-deoxyadenosine + L-methionine + 2 oxidized [2Fe-2S]-[ferredoxin] + S-adenosyl-L-homocysteine. Specifically methylates position 2 of adenine 2503 in 23S rRNA and position 2 of adenine 37 in tRNAs. m2A2503 modification seems to play a crucial role in the proofreading step occurring at the peptidyl transferase center and thus would serve to optimize ribosomal fidelity. The sequence is that of Dual-specificity RNA methyltransferase RlmN from Methylibium petroleiphilum (strain ATCC BAA-1232 / LMG 22953 / PM1).